Consider the following 338-residue polypeptide: MPGLKTHIIGKFKDKASIGKARLVHSFGSTAVKYIHLALLKSTTRTPNKPPNSDYVSAVISYSNSRYAPAAFSAALWRLRVTKNAIVATKSLIVIHKLIKSSRDKFEGLGHGRNNLKLNEFSDKSSNLTLELSQWIRWYGQYLDRLSWVPKVLGSFPNLLVNPKDKVEEKDRVSSYQTGYIIRQTDSLVSFFEHICTRPEIPPMFQNKIVDEIRELVIEDYFKIVRLVMVRLQVLFERLIKPGVKPIGDLGLNDFSLLLVRLVECKESLSGLFWRCRRLADDFWCLVEMLKAETEKKNNKQMIELAGLVQTTVKDDEEMIELVGSVQPEWVTFDDSDF.

The region spanning 27-157 is the ENTH domain; it reads FGSTAVKYIH…WVPKVLGSFP (131 aa).

It localises to the membrane. The protein resides in the clathrin-coated pit. It is found in the golgi apparatus. Its subcellular location is the cytoplasmic vesicle. The protein localises to the clathrin-coated vesicle. The polypeptide is Putative clathrin assembly protein At5g10410 (Arabidopsis thaliana (Mouse-ear cress)).